Reading from the N-terminus, the 281-residue chain is NADPH-dependent 7-cyano-7-deazaguanine reductase (281 aa).

Substrate is bound at residue 87–89 (IES). Residue 89–90 (SK) participates in NADPH binding. The active-site Thioimide intermediate is Cys-188. Asp-195 (proton donor) is an active-site residue. Substrate is bound at residue 227 to 228 (HE). 256–257 (RG) is a binding site for NADPH. The interval 261-281 (INPYRSTEQDKPAHNNRMARQ) is disordered.

Belongs to the GTP cyclohydrolase I family. QueF type 2 subfamily. As to quaternary structure, homodimer.

Its subcellular location is the cytoplasm. The catalysed reaction is 7-aminomethyl-7-carbaguanine + 2 NADP(+) = 7-cyano-7-deazaguanine + 2 NADPH + 3 H(+). It participates in tRNA modification; tRNA-queuosine biosynthesis. Its function is as follows. Catalyzes the NADPH-dependent reduction of 7-cyano-7-deazaguanine (preQ0) to 7-aminomethyl-7-deazaguanine (preQ1). The protein is NADPH-dependent 7-cyano-7-deazaguanine reductase of Vibrio campbellii (strain ATCC BAA-1116).